Consider the following 661-residue polypeptide: uncharacterized protein (661 aa).

Positions 25–52 (LLPSEPPVGDMNNEDSDTNTSITQSPTN) are disordered. Polar residues predominate over residues 42 to 52 (TNTSITQSPTN). In terms of domain architecture, SANT spans 246–297 (SMPDIWNEEQHSIFVQQFILHGKKFGKIAEAVPGKNSKECVLHYYLTKRTTD). 4 disordered regions span residues 306–329 (TKTK…KSKG), 478–499 (YYEP…TRKE), 548–570 (PMKM…TFQL), and 604–633 (RIDE…PNSQ). Basic residues predominate over residues 308–328 (TKGRRRKKLLPSQRGGKKKSK). Over residues 478–487 (YYEPKLEQHS) the composition is skewed to basic and acidic residues. Basic and acidic residues predominate over residues 604-617 (RIDELSVEDQEHTT).

It localises to the nucleus. This is an uncharacterized protein from Schizosaccharomyces pombe (strain 972 / ATCC 24843) (Fission yeast).